The chain runs to 405 residues: Beta-citrylglutamate synthase B (405 aa).

Residues 115–300 (FQELAGHGVP…VAGIVADFVL (186 aa)) enclose the ATP-grasp domain. ATP contacts are provided by residues Lys154, 189 to 199 (QEYVKESHGRD), and Arg215. Positions 260, 273, and 275 each coordinate Mg(2+). 3 residues coordinate Mn(2+): Asp260, Glu273, and Asn275. The segment at 359–387 (AMSTMSTSSTSSESEADLTETGPTPVGAN) is disordered. The span at 360-371 (MSTMSTSSTSSE) shows a compositional bias: low complexity.

Belongs to the RimK family. Mg(2+) is required as a cofactor. Mn(2+) serves as cofactor.

It is found in the cytoplasm. The catalysed reaction is citrate + L-glutamate + ATP = beta-citrylglutamate + ADP + phosphate + H(+). It carries out the reaction N-acetyl-L-aspartate + L-glutamate + ATP = N-acetyl-L-aspartyl-L-glutamate + ADP + phosphate + H(+). Catalyzes the synthesis of beta-citryl-L-glutamate and N-acetyl-L-aspartyl-L-glutamate. Beta-citryl-L-glutamate is synthesized more efficiently than N-acetyl-L-aspartyl-L-glutamate. The protein is Beta-citrylglutamate synthase B (rimklb) of Danio rerio (Zebrafish).